The sequence spans 601 residues: ATP-dependent RNA helicase DDX55 (601 aa).

The Q motif signature appears at 9-37 (WESLPVPLHPKVLSVLRELGFPYMTPVQS). A Helicase ATP-binding domain is found at 40 to 223 (IPLFMKNKDV…RAGLRNPVRI (184 aa)). 53–60 (AVTGSGKT) lines the ATP pocket. Positions 171-174 (DEAD) match the DEAD box motif. The 149-residue stretch at 254–402 (KFNQLVHFLR…EMKLQKNTAD (149 aa)) folds into the Helicase C-terminal domain. Over residues 502-514 (QQRKEKTENDGRR) the composition is skewed to basic and acidic residues. Disordered stretches follow at residues 502 to 553 (QQRK…EDME) and 576 to 601 (EKGL…EDDC). The segment covering 515–538 (KFIKNKAWSKQKAKKEKKKKLTEK) has biased composition (basic residues). The tract at residues 534-563 (KLTEKRKREEGSDVEDEDMEELLNDTRLLK) is important for nuclear localization. A phosphoserine mark is found at Ser545 and Ser595.

It belongs to the DEAD box helicase family. DDX55/SPB4 subfamily. As to quaternary structure, interacts with 28S rRNA. Interacts with double-stranded RNA substrates in vitro; the interaction stimulates ATPase activity.

Its subcellular location is the nucleus. The protein localises to the nucleoplasm. It carries out the reaction ATP + H2O = ADP + phosphate + H(+). Its function is as follows. Probable ATP-binding RNA helicase. Has ATPase activity and is involved in the maturation of precursor large subunit rRNAs. In Bos taurus (Bovine), this protein is ATP-dependent RNA helicase DDX55 (DDX55).